The following is a 345-amino-acid chain: Phosphoribosylformylglycinamidine cyclo-ligase (345 aa).

It belongs to the AIR synthase family.

It localises to the cytoplasm. It catalyses the reaction 2-formamido-N(1)-(5-O-phospho-beta-D-ribosyl)acetamidine + ATP = 5-amino-1-(5-phospho-beta-D-ribosyl)imidazole + ADP + phosphate + H(+). It participates in purine metabolism; IMP biosynthesis via de novo pathway; 5-amino-1-(5-phospho-D-ribosyl)imidazole from N(2)-formyl-N(1)-(5-phospho-D-ribosyl)glycinamide: step 2/2. The chain is Phosphoribosylformylglycinamidine cyclo-ligase from Shewanella sediminis (strain HAW-EB3).